We begin with the raw amino-acid sequence, 155 residues long: Aspartate carbamoyltransferase regulatory chain (155 aa).

Cys113, Cys118, Cys139, and Cys142 together coordinate Zn(2+).

This sequence belongs to the PyrI family. As to quaternary structure, contains catalytic and regulatory chains. The cofactor is Zn(2+).

Functionally, involved in allosteric regulation of aspartate carbamoyltransferase. In Methanospirillum hungatei JF-1 (strain ATCC 27890 / DSM 864 / NBRC 100397 / JF-1), this protein is Aspartate carbamoyltransferase regulatory chain.